The sequence spans 175 residues: MGKITFYEDRGFQGHCYECSSDCPNLQPYFSRCNSIRVDSGCWMLYERPNYQGHQYFLRRGDYPDYQQWMGFNDSIRSCRLIPQHTGTFRMRIYERDDFRGQMSEITDDCPSLQDRFHLTEVHSLNVLEGSWVLYEMPSYRGRQYLLRPGEYRRYLDWGAMNAKVGSLRRVMDFY.

Beta/gamma crystallin 'Greek key' domains follow at residues 2–40 and 41–83; these read GKIT…RVDS and GCWM…RLIP. A glycan (N-linked (Glc) (glycation) lysine; in vitro) is linked at Lys-3. A disulfide bridge connects residues Cys-19 and Cys-23. The segment at 84-88 is connecting peptide; it reads QHTGT. 2 Beta/gamma crystallin 'Greek key' domains span residues 89–129 and 130–172; these read FRMR…NVLE and GSWV…RRVM.

The protein belongs to the beta/gamma-crystallin family.

Crystallins are the dominant structural components of the vertebrate eye lens. This is Gamma-crystallin B (CRYGB) from Bos taurus (Bovine).